The sequence spans 295 residues: MYTGRFAPSPTGLLHIGSLLTAAASYADARSNGGKWLVRMEDLDPPREMPGAANHILHTLEAFGFEWDGEVAYQSRRYALYEETLCRLQTAGLVYPCHCSRKDWQTGARRGADGFVYNGRCRNPQQRPAPQGKQPAWRIRVPDRVIGFSDGIVGGYAQNLAGDIGDFVLLRADGYWAYQLAVVADDAEQGVTHIVRGQDLLVSTPRQIYLQQCLDVPTPQYAHLPLLTNAQGQKWSKQTLAPALDLNRREQLLRQVFRYLNLPEAPEADRPAELLDWAVAHWDMDKVPKHAITTP.

Residues 5 to 9 and Glu-41 contribute to the L-glutamate site; that span reads RFAPS. The short motif at 8–18 is the 'HIGH' region element; that stretch reads PSPTGLLHIGS. 4 residues coordinate Zn(2+): Cys-97, Cys-99, Tyr-117, and Cys-121. Tyr-178 and Arg-196 together coordinate L-glutamate. Residues 234–238 carry the 'KMSKS' region motif; it reads KWSKQ. Lys-237 lines the ATP pocket.

This sequence belongs to the class-I aminoacyl-tRNA synthetase family. GluQ subfamily. Zn(2+) serves as cofactor.

Functionally, catalyzes the tRNA-independent activation of glutamate in presence of ATP and the subsequent transfer of glutamate onto a tRNA(Asp). Glutamate is transferred on the 2-amino-5-(4,5-dihydroxy-2-cyclopenten-1-yl) moiety of the queuosine in the wobble position of the QUC anticodon. This is Glutamyl-Q tRNA(Asp) synthetase from Neisseria meningitidis serogroup A / serotype 4A (strain DSM 15465 / Z2491).